The following is a 490-amino-acid chain: Betaine aldehyde dehydrogenase (490 aa).

A K(+)-binding site is contributed by aspartate 93. NAD(+) is bound at residue 150–152 (GAW). The active-site Charge relay system is the lysine 162. NAD(+) is bound at residue 176 to 179 (KPSE). Valine 180 provides a ligand contact to K(+). 230 to 233 (GIAS) provides a ligand contact to NAD(+). A K(+)-binding site is contributed by leucine 246. Glutamate 252 functions as the Proton acceptor in the catalytic mechanism. Glycine 254, cysteine 286, and glutamate 387 together coordinate NAD(+). Cysteine 286 acts as the Nucleophile in catalysis. Cysteine 286 bears the Cysteine sulfenic acid (-SOH) mark. K(+) is bound by residues lysine 457 and glycine 460. Catalysis depends on glutamate 464, which acts as the Charge relay system.

It belongs to the aldehyde dehydrogenase family. In terms of assembly, dimer of dimers. It depends on K(+) as a cofactor.

The enzyme catalyses betaine aldehyde + NAD(+) + H2O = glycine betaine + NADH + 2 H(+). The protein operates within amine and polyamine biosynthesis; betaine biosynthesis via choline pathway; betaine from betaine aldehyde: step 1/1. Functionally, involved in the biosynthesis of the osmoprotectant glycine betaine. Catalyzes the irreversible oxidation of betaine aldehyde to the corresponding acid. This Yersinia pseudotuberculosis serotype I (strain IP32953) protein is Betaine aldehyde dehydrogenase.